A 97-amino-acid polypeptide reads, in one-letter code: Eotaxin (97 aa).

The first 23 residues, Met1–Ala23, serve as a signal peptide directing secretion. Disulfide bonds link Cys32/Cys57 and Cys33/Cys73. Thr94 carries an O-linked (GalNAc...) threonine glycan.

This sequence belongs to the intercrine beta (chemokine CC) family. As to expression, expressed constitutively in the thymus. Expression inducible in the lung (type I alveolar epithelial cells), intestine, heart, spleen, kidney.

It localises to the secreted. In terms of biological role, in response to the presence of allergens, this protein directly promotes the accumulation of eosinophils (a prominent feature of allergic inflammatory reactions), but not lymphocytes, macrophages or neutrophils. Binds to CCR3. The sequence is that of Eotaxin (Ccl11) from Mus musculus (Mouse).